Consider the following 696-residue polypeptide: Serine/threonine-protein kinase sck1 (696 aa).

2 disordered regions span residues 1 to 59 and 77 to 118; these read MTEI…YDPV and HKEQ…TPPS. Polar residues predominate over residues 11–37; the sequence is SSNSENTNQASPSTIQSHSTQPVLSND. 2 stretches are compositionally biased toward basic and acidic residues: residues 38-49 and 77-88; these read HSTKVNDYEGKE and HKEQSLKEDKES. In terms of domain architecture, C2 spans 122 to 272; that stretch reads IRHDTVVPKD…VQEAWYKLEP (151 aa). Positions 302 to 563 constitute a Protein kinase domain; it reads FTALRLIGKG…TTELKEHPFF (262 aa). ATP contacts are provided by residues 308–316 and K331; that span reads IGKGTFGQV. D428 serves as the catalytic Proton acceptor. The region spanning 564–643 is the AGC-kinase C-terminal domain; that stretch reads ADINWDLLSK…VNKSIDEQFQ (80 aa). The residue at position 632 (T632) is a Phosphothreonine. S665 carries the post-translational modification Phosphoserine.

This sequence belongs to the protein kinase superfamily. AGC Ser/Thr protein kinase family. cAMP subfamily.

It catalyses the reaction L-seryl-[protein] + ATP = O-phospho-L-seryl-[protein] + ADP + H(+). The catalysed reaction is L-threonyl-[protein] + ATP = O-phospho-L-threonyl-[protein] + ADP + H(+). Functionally, protein kinase that is part of growth control pathway which is at least partially redundant with the cAMP pathway. Required for trehalase activation. This is Serine/threonine-protein kinase sck1 (sck1) from Schizosaccharomyces pombe (strain 972 / ATCC 24843) (Fission yeast).